A 487-amino-acid polypeptide reads, in one-letter code: Cysteine--tRNA ligase (487 aa).

Residue Cys29 coordinates Zn(2+). The 'HIGH' region motif lies at 31-41 (VTVYDYNHVGH). Zn(2+)-binding residues include Cys209, His234, and Glu238. Positions 266 to 270 (KMSKS) match the 'KMSKS' region motif. Residue Lys269 coordinates ATP.

Belongs to the class-I aminoacyl-tRNA synthetase family. Monomer. Zn(2+) is required as a cofactor.

It is found in the cytoplasm. The catalysed reaction is tRNA(Cys) + L-cysteine + ATP = L-cysteinyl-tRNA(Cys) + AMP + diphosphate. This Sulfurihydrogenibium sp. (strain YO3AOP1) protein is Cysteine--tRNA ligase.